A 146-amino-acid chain; its full sequence is MMDINEIREYLPHRYPFLLVDRVVDLDVEGKCIRAYKNVSINEPFFNGHFPAHPIMPGVLIIEAMAQAAGILGFKMLDVKPADGTLYYFVGSDKLRFRQPVLPGDQLILEAKFISCKRQIWKFECQASVDGKPVCSAEIICAERKL.

Residue His49 is part of the active site.

The protein belongs to the thioester dehydratase family. FabZ subfamily.

The protein resides in the cytoplasm. It catalyses the reaction a (3R)-hydroxyacyl-[ACP] = a (2E)-enoyl-[ACP] + H2O. Its function is as follows. Involved in unsaturated fatty acids biosynthesis. Catalyzes the dehydration of short chain beta-hydroxyacyl-ACPs and long chain saturated and unsaturated beta-hydroxyacyl-ACPs. The protein is 3-hydroxyacyl-[acyl-carrier-protein] dehydratase FabZ of Pseudomonas fluorescens (strain ATCC BAA-477 / NRRL B-23932 / Pf-5).